The primary structure comprises 326 residues: Ras association domain-containing protein 2 (326 aa).

The interval 111–133 (EVDAPPEGDQMPSSTDSRGLKPL) is disordered. The region spanning 176–264 (YNHKTSVFTP…SKVFLMEKDQ (89 aa)) is the Ras-associating domain. Residues 272 to 319 (VAQYIKFEMPVLKSFIQKLQEEEDREVKKLMRKYTVLRLMIRQRLEEI) form the SARAH domain.

As to quaternary structure, interacts directly with activated KRAS in a GTP-dependent manner. Interacts (via SARAH domain) with STK3/MST2 and STK4/MST1. Post-translationally, phosphorylated by STK3/MST2 and STK4/MST1. As to expression, widely expressed with highest levels in brain, placenta, peripheral blood and lung. Frequently down-regulated in lung tumor cell lines.

The protein resides in the nucleus. It localises to the cytoplasm. Its subcellular location is the chromosome. The protein localises to the centromere. It is found in the kinetochore. Functionally, potential tumor suppressor. Acts as a KRAS-specific effector protein. May promote apoptosis and cell cycle arrest. Stabilizes STK3/MST2 by protecting it from proteasomal degradation. The sequence is that of Ras association domain-containing protein 2 (RASSF2) from Homo sapiens (Human).